Reading from the N-terminus, the 158-residue chain is C-type lectin BML-1 (158 aa).

The N-terminal stretch at 1–23 (MGHFTFTGLCLLAMFLSLRGAEC) is a signal peptide. 4 cysteine pairs are disulfide-bonded: C26-C37, C54-C154, C61-C156, and C129-C146. The region spanning 33–155 (KNGLCYKVFS…CAALRPFLCQ (123 aa)) is the C-type lectin domain. 3 residues coordinate Ca(2+): Q119, D121, and E127. A Galactose-binding motif is present at residues 119-121 (QPD). N134 is a glycosylation site (N-linked (GlcNAc...) asparagine). N142 and D143 together coordinate Ca(2+).

This sequence belongs to the true venom lectin family. As to quaternary structure, homodimer; non-covalently linked. Expressed by the venom gland.

It is found in the secreted. Recombinant C-type lectin BML-1 is able to agglutinate erythrocytes. May be a calcium-dependent lectin. This Bungarus multicinctus (Many-banded krait) protein is C-type lectin BML-1.